A 167-amino-acid polypeptide reads, in one-letter code: Early nodulin-like protein 16 (167 aa).

The signal sequence occupies residues 1 to 24 (MARVAVLVAGAVLAFLLAATNVTA). A Phytocyanin domain is found at 25-126 (KRWTVGDNKF…GMKLAVLVEK (102 aa)). Residues Asn40, Asn71, Asn86, and Asn99 are each glycosylated (N-linked (GlcNAc...) asparagine). A disulfide bridge connects residues Cys78 and Cys114. Residue Asn138 is the site of GPI-anchor amidated asparagine attachment. A propeptide spans 139–167 (SARRTFSVSGFAYQFLIPVAVFAAVGTRY) (removed in mature form).

Belongs to the early nodulin-like (ENODL) family.

The protein resides in the cell membrane. Functionally, may act as a carbohydrate transporter. The chain is Early nodulin-like protein 16 from Arabidopsis thaliana (Mouse-ear cress).